A 535-amino-acid chain; its full sequence is NAD(P)H-quinone oxidoreductase chain 4 2 (535 aa).

14 consecutive transmembrane segments (helical) span residues 9 to 29, 51 to 71, 106 to 126, 130 to 150, 152 to 172, 184 to 204, 227 to 247, 258 to 278, 290 to 310, 326 to 346, 347 to 367, 399 to 419, 432 to 452, and 479 to 499; these read FPWL…IPLI, WFAL…FYVG, LILL…PVTL, LFYF…AVQD, LLFF…LSIW, FILY…AMAF, LLLY…FPLH, TAPV…YALM, LYFA…AALT, ISHM…GMSG, AMLQ…LVGA, LASL…VFIG, LVVV…LLSM, and VFII…PKLV.

This sequence belongs to the complex I subunit 4 family.

It localises to the cellular thylakoid membrane. It carries out the reaction a plastoquinone + NADH + (n+1) H(+)(in) = a plastoquinol + NAD(+) + n H(+)(out). The enzyme catalyses a plastoquinone + NADPH + (n+1) H(+)(in) = a plastoquinol + NADP(+) + n H(+)(out). NDH-1 shuttles electrons from NAD(P)H, via FMN and iron-sulfur (Fe-S) centers, to quinones in the respiratory chain. The immediate electron acceptor for the enzyme in this species is believed to be plastoquinone. Couples the redox reaction to proton translocation (for every two electrons transferred, four hydrogen ions are translocated across the cytoplasmic membrane), and thus conserves the redox energy in a proton gradient. In Synechococcus sp. (strain JA-3-3Ab) (Cyanobacteria bacterium Yellowstone A-Prime), this protein is NAD(P)H-quinone oxidoreductase chain 4 2.